Consider the following 345-residue polypeptide: Platelet-derived growth factor C (345 aa).

The N-terminal stretch at 1–22 is a signal peptide; the sequence is MLLLGLLLLTSALAGRRHGAAA. In terms of domain architecture, CUB spans 46-163; sequence HEKIITVTSN…PGFCIHYTLL (118 aa). A glycan (N-linked (GlcNAc...) asparagine) is linked at Asn-55. Intrachain disulfides connect Cys-104/Cys-124, Cys-250/Cys-294, Cys-280/Cys-335, and Cys-287/Cys-337.

It belongs to the PDGF/VEGF growth factor family. In terms of assembly, homodimer; disulfide-linked. Interacts with PDGFRA homodimers, and with heterodimers formed by PDGFRA and PDGFRB. Proteolytic removal of the N-terminal CUB domain releasing the core domain is necessary for unmasking the receptor-binding epitopes of the core domain. Cleavage after basic residues in the hinge region (region connecting the CUB and growth factor domains) gives rise to the receptor-binding form.

It is found in the secreted. Its function is as follows. Growth factor that plays an essential role in the regulation of embryonic development, cell proliferation, cell migration, survival and chemotaxis. Potent mitogen and chemoattractant for cells of mesenchymal origin. Required for normal skeleton formation during embryonic development. Required for normal skin morphogenesis during embryonic development. Plays an important role in wound healing, in angiogenesis and blood vessel development. This is Platelet-derived growth factor C (PDGFC) from Gallus gallus (Chicken).